A 125-amino-acid chain; its full sequence is Probable 4-amino-4-deoxy-L-arabinose-phosphoundecaprenol flippase subunit ArnF (125 aa).

The Cytoplasmic portion of the chain corresponds to 1-2; it reads MG. Residues 3 to 23 traverse the membrane as a helical segment; the sequence is VMWGLISVAIASLAQLSLGFA. At 24-33 the chain is on the periplasmic side; sequence MMRLPSIAHP. The chain crosses the membrane as a helical span at residues 34–54; it reads LAFISGLGAFNAATLALFAGL. Residues 55-76 are Cytoplasmic-facing; the sequence is AGYLVSVFCWQKTLHTLALSKA. A helical membrane pass occupies residues 77–97; sequence YALLSLSYVLVWVASMLLPGL. Over 98–100 the chain is Periplasmic; the sequence is QGA. A helical membrane pass occupies residues 101–121; it reads FSLKAMLGVLCIMAGVMLIFL. Over 122-125 the chain is Cytoplasmic; the sequence is PARS.

The protein belongs to the ArnF family. In terms of assembly, heterodimer of ArnE and ArnF.

The protein resides in the cell inner membrane. The protein operates within bacterial outer membrane biogenesis; lipopolysaccharide biosynthesis. Translocates 4-amino-4-deoxy-L-arabinose-phosphoundecaprenol (alpha-L-Ara4N-phosphoundecaprenol) from the cytoplasmic to the periplasmic side of the inner membrane. This Salmonella choleraesuis (strain SC-B67) protein is Probable 4-amino-4-deoxy-L-arabinose-phosphoundecaprenol flippase subunit ArnF.